The sequence spans 934 residues: UPF0182 protein sync_1321 (934 aa).

The next 9 membrane-spanning stretches (helical) occupy residues 2 to 22 (AKII…IVII), 45 to 65 (LLLQ…CALW), 86 to 106 (GYRY…VLAI), 129 to 149 (FSTG…IMFG), 165 to 185 (VCIC…FSIP), 208 to 228 (IAFG…TALW), 251 to 271 (HGLR…MWLS), 300 to 320 (LGSI…FSSV), and 327 to 347 (LILA…FPLM).

The protein belongs to the UPF0182 family.

It is found in the cell membrane. This is UPF0182 protein sync_1321 from Synechococcus sp. (strain CC9311).